A 260-amino-acid polypeptide reads, in one-letter code: Putative ABC transporter ATP-binding protein PF0068 (260 aa).

Residues 2-234 (IEVKGVWFWY…DLKRYKLEEP (233 aa)) enclose the ABC transporter domain. An ATP-binding site is contributed by 34 to 41 (GPNGSGKT).

It belongs to the ABC transporter superfamily.

It localises to the cell membrane. Probably part of an ABC transporter complex. Responsible for energy coupling to the transport system. In Pyrococcus furiosus (strain ATCC 43587 / DSM 3638 / JCM 8422 / Vc1), this protein is Putative ABC transporter ATP-binding protein PF0068.